Here is a 746-residue protein sequence, read N- to C-terminus: Dystrobrevin alpha (746 aa).

Residues 1–288 (MIEDSGKRGN…SHSNQHQMKE (288 aa)) form an interaction with MAGEE1 region. The ZZ-type zinc-finger motif lies at 238–294 (FHPVECSYCHSESMMGFRYRCQQCHNYQLCQDCFWRGHAGGSHSNQHQMKEYTSWKS). 8 residues coordinate Zn(2+): Cys243, Cys246, Cys258, Cys261, Cys267, Cys270, His280, and His284. The tract at residues 397 to 447 (DRLADEHVLIGLYVNMLRNDPPCMLESSNRLDEEHRLIARYAARLAAESSS) is syntrophin-binding region. The stretch at 458-557 (DISFTIDANK…KLLKEEELKQ (100 aa)) forms a coiled coil. Disordered regions lie at residues 555–577 (LKQG…SRPI), 646–667 (ETES…APSP), and 684–721 (YIHG…VRQL). A compositionally biased stretch (low complexity) spans 563 to 576 (SSPRSSPSHTISRP). At Ser666 the chain carries Phosphoserine.

It belongs to the dystrophin family. Dystrobrevin subfamily. Interacts with dystrophin, utrophin and the syntrophins SNTA1, SNTB1, SNTB2, SNTG1 and SNTG2. Binds dystrobrevin binding protein 1. Interacts with MAGEE1. Interacts with Ctnnal1. The interaction is required for correct localization of both Ctnnal1 and Dtna. In terms of assembly, does not interact with utrophin. As to quaternary structure, does not interact with syntrophin. In terms of processing, phosphorylation of isoform 2 on tyrosine kinase substrate domain present in the C-terminus. Expressed in skeletal muscle, heart, lung and brain. Sarcolemma and neuromuscular junction in skeletal muscle. Isoform 2 is restricted to the neuromuscular junction. Isoforms 5 and 6 are only expressed in muscle.

It localises to the cytoplasm. The protein resides in the synapse. Its subcellular location is the cell membrane. Involved in synapse maturation and required for normal muscle function. The polypeptide is Dystrobrevin alpha (Dtna) (Mus musculus (Mouse)).